Here is a 749-residue protein sequence, read N- to C-terminus: 5-methyltetrahydropteroyltriglutamate--homocysteine methyltransferase (749 aa).

Residues 15-18 (RELK) and K114 each bind 5-methyltetrahydropteroyltri-L-glutamate. L-homocysteine-binding positions include 425–427 (IGS) and E478. Residues 425 to 427 (IGS) and E478 each bind L-methionine. W555 contributes to the 5-methyltetrahydropteroyltri-L-glutamate binding site. D593 lines the L-homocysteine pocket. Position 593 (D593) interacts with L-methionine. 5-methyltetrahydropteroyltri-L-glutamate is bound at residue E599. Zn(2+) contacts are provided by H636, C638, and E660. H689 serves as the catalytic Proton donor. C721 contacts Zn(2+).

Belongs to the vitamin-B12 independent methionine synthase family. Zn(2+) is required as a cofactor.

The enzyme catalyses 5-methyltetrahydropteroyltri-L-glutamate + L-homocysteine = tetrahydropteroyltri-L-glutamate + L-methionine. Its pathway is amino-acid biosynthesis; L-methionine biosynthesis via de novo pathway; L-methionine from L-homocysteine (MetE route): step 1/1. Its function is as follows. Catalyzes the transfer of a methyl group from 5-methyltetrahydrofolate to homocysteine resulting in methionine formation. The chain is 5-methyltetrahydropteroyltriglutamate--homocysteine methyltransferase from Streptococcus pneumoniae serotype 2 (strain D39 / NCTC 7466).